Consider the following 104-residue polypeptide: Protein RnfH (104 aa).

The segment at 80 to 104 (PLTADPKLNRKRRAKEKASAGKASN) is disordered.

The protein belongs to the UPF0125 (RnfH) family.

The protein is Protein RnfH of Alcanivorax borkumensis (strain ATCC 700651 / DSM 11573 / NCIMB 13689 / SK2).